We begin with the raw amino-acid sequence, 307 residues long: Malate dehydrogenase (307 aa).

NAD(+) contacts are provided by residues 8–13 (GAGNVG) and aspartate 32. Substrate contacts are provided by arginine 81 and arginine 87. NAD(+)-binding positions include asparagine 94 and 117 to 119 (VTN). Substrate is bound by residues asparagine 119 and arginine 150. The active-site Proton acceptor is the histidine 174.

It belongs to the LDH/MDH superfamily.

It catalyses the reaction (S)-malate + NAD(+) = oxaloacetate + NADH + H(+). In terms of biological role, catalyzes the reversible oxidation of malate to oxaloacetate. This chain is Malate dehydrogenase (mdh), found in Methanosarcina barkeri (strain Fusaro / DSM 804).